We begin with the raw amino-acid sequence, 207 residues long: GILT-like protein 2 (207 aa).

The signal sequence occupies residues 1–19; the sequence is MRAAVFVCLLLGWVGVATP. C40 and C43 are joined by a disulfide. N-linked (GlcNAc...) asparagine glycosylation occurs at N182.

It belongs to the GILT family.

It localises to the secreted. Functionally, probable lysosomal thiol reductase that can reduce protein disulfide bonds. Involved in the immune response to bacterial infection. The polypeptide is GILT-like protein 2 (Drosophila melanogaster (Fruit fly)).